The chain runs to 181 residues: TATA-box-binding protein (181 aa).

2 repeat units span residues 7–83 and 98–173.

Belongs to the TBP family.

Functionally, general factor that plays a role in the activation of archaeal genes transcribed by RNA polymerase. Binds specifically to the TATA box promoter element which lies close to the position of transcription initiation. This Methanococcus aeolicus (strain ATCC BAA-1280 / DSM 17508 / OCM 812 / Nankai-3) protein is TATA-box-binding protein.